The following is a 325-amino-acid chain: Probable isoaspartyl peptidase/L-asparaginase GA20639 (325 aa).

Residue T184 is the Nucleophile of the active site. Substrate-binding positions include 212 to 215 and 235 to 238; these read RIGD and TGHG.

The protein belongs to the Ntn-hydrolase family. As to quaternary structure, heterodimer of an alpha and beta chain produced by autocleavage. Post-translationally, cleaved into an alpha and beta chain by autocatalysis; this activates the enzyme. The N-terminal residue of the beta subunit is responsible for the nucleophile hydrolase activity.

It catalyses the reaction L-asparagine + H2O = L-aspartate + NH4(+). The catalysed reaction is Cleavage of a beta-linked Asp residue from the N-terminus of a polypeptide.. Has both L-asparaginase and beta-aspartyl peptidase activity. Does not have aspartylglucosaminidase activity and is inactive toward GlcNAc-L-Asn. Likewise, has no activity toward glutamine. This is Probable isoaspartyl peptidase/L-asparaginase GA20639 from Drosophila pseudoobscura pseudoobscura (Fruit fly).